Here is a 103-residue protein sequence, read N- to C-terminus: UPF0473 protein LVIS_1220 (103 aa).

Belongs to the UPF0473 family.

This is UPF0473 protein LVIS_1220 from Levilactobacillus brevis (strain ATCC 367 / BCRC 12310 / CIP 105137 / JCM 1170 / LMG 11437 / NCIMB 947 / NCTC 947) (Lactobacillus brevis).